A 749-amino-acid chain; its full sequence is Cytosolic phospholipase A2 (749 aa).

A phospholipid binding region spans residues 1–178 (MSFIDPYQHI…MKKLLGPKNS (178 aa)). S2 carries the post-translational modification Phosphoserine. Residues 6–122 (PYQHIIVEHQ…KVGEKKEVPF (117 aa)) enclose the C2 domain. The Ca(2+) site is built by D40, T41, D43, N65, D93, A94, and N95. In terms of domain architecture, PLA2c spans 140-740 (SCPDLRFSMA…SNVEARRFFN (601 aa)). S228 serves as the catalytic Nucleophile. At T268 the chain carries Phosphothreonine. The tract at residues 409 to 457 (GSQSRGSTMEEELENITTKHIVSNDSSDSDDESHEPKGTENEDAGSDYQ) is disordered. S434, S435, and S437 each carry phosphoserine. S505 carries the phosphoserine; by MAPK modification. S515 carries the phosphoserine modification. Residue K541 forms a Glycyl lysine isopeptide (Lys-Gly) (interchain with G-Cter in SUMO2) linkage. D549 serves as the catalytic Proton acceptor. A Glycyl lysine isopeptide (Lys-Gly) (interchain with G-Cter in SUMO2) cross-link involves residue K606. 2 positions are modified to phosphoserine: S727 and S729.

In terms of assembly, interacts with KAT5. In terms of processing, phosphorylated at both Ser-505 and Ser-727 in response to mitogenic stimuli.

It localises to the cytoplasm. The protein localises to the golgi apparatus membrane. The protein resides in the nucleus envelope. The catalysed reaction is a 1,2-diacyl-sn-glycero-3-phosphocholine + H2O = a 1-acyl-sn-glycero-3-phosphocholine + a fatty acid + H(+). It catalyses the reaction a 1-O-alkyl-2-acyl-sn-glycero-3-phosphocholine + H2O = a 1-O-alkyl-sn-glycero-3-phosphocholine + a fatty acid + H(+). The enzyme catalyses a 1-acyl-sn-glycero-3-phosphocholine + H2O = sn-glycerol 3-phosphocholine + a fatty acid + H(+). It carries out the reaction 1-hexadecanoyl-2-(5Z,8Z,11Z,14Z-eicosatetraenoyl)-sn-glycero-3-phosphocholine + H2O = 1-hexadecanoyl-sn-glycero-3-phosphocholine + (5Z,8Z,11Z,14Z)-eicosatetraenoate + H(+). The catalysed reaction is 1,2-di-(5Z,8Z,11Z,14Z-eicosatetraenoyl)-sn-glycero-3-phosphocholine + H2O = 1-(5Z,8Z,11Z,14Z-eicosatetraenoyl)-sn-glycero-3-phosphocholine + (5Z,8Z,11Z,14Z)-eicosatetraenoate + H(+). It catalyses the reaction 1-octadecanoyl-2-(5Z,8Z,11Z,14Z-eicosatetraenoyl)-sn-glycero-3-phosphocholine + H2O = 1-octadecanoyl-sn-glycero-3-phosphocholine + (5Z,8Z,11Z,14Z)-eicosatetraenoate + H(+). The enzyme catalyses 1-hexadecanoyl-2-(9Z,12Z-octadecadienoyl)-sn-glycero-3-phosphocholine + H2O = (9Z,12Z)-octadecadienoate + 1-hexadecanoyl-sn-glycero-3-phosphocholine + H(+). It carries out the reaction 1-octadecanoyl-2-(9Z,12Z,15Z-octadecatrienoyl)-sn-glycero-3-phosphocholine + H2O = (9Z,12Z,15Z)-octadecatrienoate + 1-octadecanoyl-sn-glycero-3-phosphocholine + H(+). The catalysed reaction is 1-(5Z,8Z,11Z,14Z-eicosatetraenoyl)-2-hexadecanoyl-sn-glycero-3-phosphocholine + H2O = 1-(5Z,8Z,11Z,14Z-eicosatetraenoyl)-sn-glycero-3-phosphocholine + hexadecanoate + H(+). It catalyses the reaction 1-O-hexadecyl-2-(5Z,8Z,11Z,14Z)-eicosatetraenoyl-sn-glycero-3-phosphocholine + H2O = 1-O-hexadecyl-sn-glycero-3-phosphocholine + (5Z,8Z,11Z,14Z)-eicosatetraenoate + H(+). The enzyme catalyses 1,2-di-(9Z-octadecenoyl)-sn-glycero-3-phospho-(1'-sn-glycerol) + H2O = 1-(9Z-octadecenoyl)-sn-glycero-3-phospho-(1'-sn-glycerol) + (9Z)-octadecenoate + H(+). It carries out the reaction 1-octadecanoyl-2-(5Z,8Z,11Z,14Z-eicosatetraenoyl)-sn-glycero-3-phosphate + H2O = 1-octadecanoyl-sn-glycero-3-phosphate + (5Z,8Z,11Z,14Z)-eicosatetraenoate + H(+). The catalysed reaction is 1-hexadecanoyl-sn-glycero-3-phosphocholine + H2O = sn-glycerol 3-phosphocholine + hexadecanoate + H(+). It catalyses the reaction 2-(prostaglandin E2)-sn-glycero-3-phosphoethanolamine + H2O = sn-glycero-3-phosphoethanolamine + prostaglandin E2 + H(+). The enzyme catalyses 2-[(15S)-hydroxy-(5Z,8Z,11Z,13E)-eicosatetraenoyl]-sn-glycero-3-phosphocholine + H2O = (15S)-hydroxy-(5Z,8Z,11Z,13E)-eicosatetraenoate + sn-glycerol 3-phosphocholine + H(+). It carries out the reaction 2-[(15R)-hydroxy-(5Z,8Z,11Z,13E)-eicosatetraenoyl]-sn-glycero-3-phosphocholine + H2O = (15R)-hydroxy-(5Z,8Z,11Z,13E)-eicosatetraenoate + sn-glycerol 3-phosphocholine + H(+). The catalysed reaction is 2-(prostaglandin E2)-sn-glycero-3-phosphocholine + H2O = prostaglandin E2 + sn-glycerol 3-phosphocholine + H(+). It catalyses the reaction 2-[(11R)-hydroxy-(5Z,8Z,12E,14Z)-eicosatetraenoyl]-sn-glycero-3-phosphocholine + H2O = (11R)-hydroxy-(5Z,8Z,12E,14Z)-eicosatetraenoate + sn-glycerol 3-phosphocholine + H(+). The enzyme catalyses 1-(5Z,8Z,11Z,14Z-eicosatetraenoyl)-2-O-hexadecyl-sn-glycero-3-phosphocholine + H2O = 2-O-hexadecyl-sn-glycero-3-phosphocholine + (5Z,8Z,11Z,14Z)-eicosatetraenoate + H(+). It carries out the reaction 1-octadecanoyl-2-(5Z,8Z,11Z,14Z-eicosatetraenoyl)-sn-glycero-3-phosphocholine + glycerol = 1-(5Z,8Z,11Z,14Z-eicosatetraenoyl)-glycerol + 1-octadecanoyl-sn-glycero-3-phosphocholine. The catalysed reaction is 1-octadecanoyl-2-(9Z,12Z,15Z-octadecatrienoyl)-sn-glycero-3-phosphocholine + glycerol = 1-(9Z,12Z,15Z-octadecatrienoyl)-glycerol + 1-octadecanoyl-sn-glycero-3-phosphocholine. It functions in the pathway membrane lipid metabolism; glycerophospholipid metabolism. Its pathway is lipid metabolism; arachidonate metabolism. It participates in lipid metabolism; prostaglandin biosynthesis. The protein operates within lipid metabolism; leukotriene B4 biosynthesis. Activated by cytosolic calcium, which is necessary for binding to membrane lipids. Activated by phosphorylation in response to mitogenic stimuli. Has primarily calcium-dependent phospholipase and lysophospholipase activities, with a major role in membrane lipid remodeling and biosynthesis of lipid mediators of the inflammatory response. Plays an important role in embryo implantation and parturition through its ability to trigger prostanoid production. Preferentially hydrolyzes the ester bond of the fatty acyl group attached at sn-2 position of phospholipids (phospholipase A2 activity). Selectively hydrolyzes sn-2 arachidonoyl group from membrane phospholipids, providing the precursor for eicosanoid biosynthesis via the cyclooxygenase pathway. In an alternative pathway of eicosanoid biosynthesis, hydrolyzes sn-2 fatty acyl chain of eicosanoid lysophopholipids to release free bioactive eicosanoids. Hydrolyzes the ester bond of the fatty acyl group attached at sn-1 position of phospholipids (phospholipase A1 activity) only if an ether linkage rather than an ester linkage is present at the sn-2 position. This hydrolysis is not stereospecific. Has calcium-independent phospholipase A2 and lysophospholipase activities in the presence of phosphoinositides. Has O-acyltransferase activity. Catalyzes the transfer of fatty acyl chains from phospholipids to a primary hydroxyl group of glycerol (sn-1 or sn-3), potentially contributing to monoacylglycerol synthesis. The polypeptide is Cytosolic phospholipase A2 (PLA2G4A) (Pongo abelii (Sumatran orangutan)).